A 206-amino-acid polypeptide reads, in one-letter code: Peptidyl-tRNA hydrolase (206 aa).

Tyr-14 contacts tRNA. His-19 functions as the Proton acceptor in the catalytic mechanism. 2 residues coordinate tRNA: Tyr-64 and Asn-66. A disordered region spans residues 182 to 206 (FNQKNKKKKEKEQPEAATDQLLENK).

Belongs to the PTH family. Monomer.

Its subcellular location is the cytoplasm. The enzyme catalyses an N-acyl-L-alpha-aminoacyl-tRNA + H2O = an N-acyl-L-amino acid + a tRNA + H(+). Its function is as follows. Hydrolyzes ribosome-free peptidyl-tRNAs (with 1 or more amino acids incorporated), which drop off the ribosome during protein synthesis, or as a result of ribosome stalling. In terms of biological role, catalyzes the release of premature peptidyl moieties from peptidyl-tRNA molecules trapped in stalled 50S ribosomal subunits, and thus maintains levels of free tRNAs and 50S ribosomes. The polypeptide is Peptidyl-tRNA hydrolase (Desulforamulus reducens (strain ATCC BAA-1160 / DSM 100696 / MI-1) (Desulfotomaculum reducens)).